We begin with the raw amino-acid sequence, 290 residues long: Elongation factor Ts (290 aa).

The tract at residues 81–84 (TDFV) is involved in Mg(2+) ion dislocation from EF-Tu.

Belongs to the EF-Ts family.

It localises to the cytoplasm. Associates with the EF-Tu.GDP complex and induces the exchange of GDP to GTP. It remains bound to the aminoacyl-tRNA.EF-Tu.GTP complex up to the GTP hydrolysis stage on the ribosome. This chain is Elongation factor Ts, found in Vesicomyosocius okutanii subsp. Calyptogena okutanii (strain HA).